The primary structure comprises 263 residues: 4'-phosphopantetheinyl transferase pptA (263 aa).

Belongs to the P-Pant transferase superfamily.

It catalyses the reaction apo-[ACP] + CoA = holo-[ACP] + adenosine 3',5'-bisphosphate + H(+). Transfers the 4'-phosphopantetheine moiety from coenzyme A to a Ser of an acyl-carrier-protein. Activates the peptidyl carrier protein (PCP) domains of surfactin synthas. This Paxillus involutus (Naked brimcap) protein is 4'-phosphopantetheinyl transferase pptA (pptA).